The primary structure comprises 273 residues: Hydroxyethylthiazole kinase 2 (273 aa).

Methionine 45 serves as a coordination point for substrate. 2 residues coordinate ATP: lysine 120 and threonine 173. Residue glycine 200 participates in substrate binding.

The protein belongs to the Thz kinase family. Mg(2+) serves as cofactor.

The enzyme catalyses 5-(2-hydroxyethyl)-4-methylthiazole + ATP = 4-methyl-5-(2-phosphooxyethyl)-thiazole + ADP + H(+). It functions in the pathway cofactor biosynthesis; thiamine diphosphate biosynthesis; 4-methyl-5-(2-phosphoethyl)-thiazole from 5-(2-hydroxyethyl)-4-methylthiazole: step 1/1. Functionally, catalyzes the phosphorylation of the hydroxyl group of 4-methyl-5-beta-hydroxyethylthiazole (THZ). This chain is Hydroxyethylthiazole kinase 2, found in Leuconostoc mesenteroides subsp. mesenteroides (strain ATCC 8293 / DSM 20343 / BCRC 11652 / CCM 1803 / JCM 6124 / NCDO 523 / NBRC 100496 / NCIMB 8023 / NCTC 12954 / NRRL B-1118 / 37Y).